Consider the following 391-residue polypeptide: Protein ABCI12, chloroplastic (391 aa).

Residues 1 to 63 constitute a chloroplast transit peptide; sequence MNHSNLANPT…LAAKRVFIVR (63 aa). A run of 5 helical transmembrane segments spans residues 134-154, 168-188, 229-249, 263-283, and 370-390; these read ANLV…ILVL, LLSG…PPML, VGST…ICLA, FLFP…TLLL, and FASV…EYFL.

The protein resides in the plastid. It localises to the chloroplast. Its subcellular location is the membrane. The chain is Protein ABCI12, chloroplastic (ABCI12) from Arabidopsis thaliana (Mouse-ear cress).